Here is a 529-residue protein sequence, read N- to C-terminus: Delayed-rectifier potassium channel regulatory subunit KCNS1 (529 aa).

The Cytoplasmic segment spans residues methionine 1–leucine 217. The helical transmembrane segment at proline 218 to isoleucine 239 threads the bilayer. Over histidine 240–proline 270 the chain is Extracellular. The helical transmembrane segment at valine 271–leucine 293 threads the bilayer. Over alanine 294–proline 304 the chain is Cytoplasmic. A helical membrane pass occupies residues leucine 305–alanine 322. At glycine 323 to leucine 340 the chain is on the extracellular side. Residues glycine 341–histidine 361 form a helical; Voltage-sensor membrane-spanning segment. The Cytoplasmic portion of the chain corresponds to serine 362–tyrosine 376. The helical transmembrane segment at arginine 377–tyrosine 398 threads the bilayer. Over threonine 399–isoleucine 411 the chain is Extracellular. Residues proline 412–threonine 423 constitute an intramembrane region (helical). Positions threonine 424–aspartate 429 match the Selectivity filter motif. An intramembrane segment occupies threonine 424–valine 431. Residues proline 432–lysine 438 are Extracellular-facing. Residues leucine 439–tyrosine 467 form a helical membrane-spanning segment. Over arginine 468–tyrosine 529 the chain is Cytoplasmic. The interval glycine 494–tyrosine 529 is disordered. The span at threonine 502–aspartate 514 shows a compositional bias: basic and acidic residues.

It belongs to the potassium channel family. S (TC 1.A.1.2) subfamily. Kv9.1/KCNS1 sub-subfamily. Heterotetramer with KCNB1. Heterotetramer with KCNB2. Does not form homomultimers.

It is found in the cell membrane. In terms of biological role, potassium channel regulatory subunit that modulate the delayed rectifier voltage-gated potassium channel activity of KCNB1 and KCNB2 by altering their kinetics, expression levels, and shifting the half-inactivation potential to more polarized values. While it does not form functional channels on its own, it can form functional heterotetrameric channels with KCNB1 and KCNB2. Each regulatory subunit has unique regulatory properties that can lead to extensive inhibition, significant changes in kinetics, and/or substantial shifts in the voltage dependencies of the inactivation process. This Macaca mulatta (Rhesus macaque) protein is Delayed-rectifier potassium channel regulatory subunit KCNS1.